Consider the following 115-residue polypeptide: Large ribosomal subunit protein uL22 (115 aa).

This sequence belongs to the universal ribosomal protein uL22 family. Part of the 50S ribosomal subunit.

Functionally, this protein binds specifically to 23S rRNA; its binding is stimulated by other ribosomal proteins, e.g. L4, L17, and L20. It is important during the early stages of 50S assembly. It makes multiple contacts with different domains of the 23S rRNA in the assembled 50S subunit and ribosome. Its function is as follows. The globular domain of the protein is located near the polypeptide exit tunnel on the outside of the subunit, while an extended beta-hairpin is found that lines the wall of the exit tunnel in the center of the 70S ribosome. In Limosilactobacillus reuteri subsp. reuteri (strain JCM 1112) (Lactobacillus reuteri), this protein is Large ribosomal subunit protein uL22.